Consider the following 615-residue polypeptide: Zinc finger protein 653 (615 aa).

4 disordered regions span residues 1 to 48 (MAER…ARRR), 95 to 117 (RSGR…KRRR), 176 to 236 (PLSD…SSGL), and 401 to 432 (EEKE…ELDG). A Nuclear localization signal motif is present at residues 107–118 (PKKPKRKKRRRR). Over residues 108–117 (KKPKRKKRRR) the composition is skewed to basic residues. A compositionally biased stretch (low complexity) spans 193–205 (AGSSDSSSSGSAS). Residues 226-236 (TPTSPVGSSGL) are compositionally biased toward polar residues. Residues 419-432 (AEPEAEADGEELDG) are compositionally biased toward acidic residues. The Nuclear localization signal signature appears at 445 to 451 (EPEKRRR). 5 consecutive C2H2-type zinc fingers follow at residues 467–492 (FHCP…NLVH), 498–522 (KVCP…MIIH), 528–550 (FTCE…RRTH), 556–578 (LQCE…MKKH), and 586–609 (FTCD…LKSH).

It belongs to the krueppel C2H2-type zinc-finger protein family. In terms of assembly, interacts with NR5A1. In terms of tissue distribution, highly expressed in testis, cerebellum, temporal lobe, hippocampus and the adrenal gland. Moderately expressed in spleen, uterus, thymus, pancreas, kidney, stomach and rectum.

It is found in the nucleus. Transcriptional repressor. May repress NR5A1, PPARG, NR1H3, NR4A2, ESR1 and NR3C1 transcriptional activity. This is Zinc finger protein 653 (ZNF653) from Homo sapiens (Human).